The following is a 288-amino-acid chain: Histone-lysine N-methyltransferase Suv4-20 (288 aa).

Residues 128 to 238 form the SET domain; sequence QECKRYSQEG…PGDEITCFYG (111 aa).

The protein belongs to the class V-like SAM-binding methyltransferase superfamily. Histone-lysine methyltransferase family. Suvar4-20 subfamily.

Its subcellular location is the nucleus. It localises to the chromosome. It catalyses the reaction N(6)-methyl-L-lysyl(20)-[histone H4] + S-adenosyl-L-methionine = N(6),N(6)-dimethyl-L-lysyl(20)-[histone H4] + S-adenosyl-L-homocysteine + H(+). The catalysed reaction is N(6),N(6)-dimethyl-L-lysyl(20)-[histone H4] + S-adenosyl-L-methionine = N(6),N(6),N(6)-trimethyl-L-lysyl(20)-[histone H4] + S-adenosyl-L-homocysteine + H(+). Histone methyltransferase that specifically di- and trimethylates 'Lys-20' of histone H4 (H4K20me2/me3). H4 'Lys-20' trimethylation represents a specific tag for epigenetic transcriptional repression. Contributes to dosage compensation of X chromosome-relative to autosome-linked gene expression, possibly by converting H4K20me1 to H4K20m2/me3 on autosomes. Involved in the regulation of growth and body fat metabolism downstream of the TOR complex 2 pathway. This chain is Histone-lysine N-methyltransferase Suv4-20 (set-4), found in Caenorhabditis elegans.